We begin with the raw amino-acid sequence, 462 residues long: Argininosuccinate lyase (462 aa).

Belongs to the lyase 1 family. Argininosuccinate lyase subfamily.

It is found in the cytoplasm. It catalyses the reaction 2-(N(omega)-L-arginino)succinate = fumarate + L-arginine. It functions in the pathway amino-acid biosynthesis; L-arginine biosynthesis; L-arginine from L-ornithine and carbamoyl phosphate: step 3/3. This chain is Argininosuccinate lyase, found in Bacillus mycoides (strain KBAB4) (Bacillus weihenstephanensis).